The sequence spans 51 residues: Micropeptide inhibiting actin cytoskeleton (51 aa).

The segment at 1 to 22 (MERAGVPGFSPRRSSVEAKMQS) is disordered.

As to quaternary structure, interacts with aquaporin AQP2.

Reduces filamentous actin fibers by interacting with aquaporin AQP2 which leads to inhibition of the expression of SEPTIN4 and integrin ITGB4. Also inhibits the activation of the EREG/EGFR signaling pathway through interaction with AQP2. The chain is Micropeptide inhibiting actin cytoskeleton from Homo sapiens (Human).